Here is a 462-residue protein sequence, read N- to C-terminus: UDP-N-acetylmuramate--L-alanine ligase (462 aa).

117-123 contacts ATP; the sequence is GTHGKTT.

It belongs to the MurCDEF family.

The protein resides in the cytoplasm. It catalyses the reaction UDP-N-acetyl-alpha-D-muramate + L-alanine + ATP = UDP-N-acetyl-alpha-D-muramoyl-L-alanine + ADP + phosphate + H(+). It functions in the pathway cell wall biogenesis; peptidoglycan biosynthesis. Cell wall formation. The protein is UDP-N-acetylmuramate--L-alanine ligase of Streptomyces coelicolor (strain ATCC BAA-471 / A3(2) / M145).